A 403-amino-acid polypeptide reads, in one-letter code: Glucose/galactose-binding lipoprotein (403 aa).

Residues 1–25 form the signal peptide; it reads MKENSCTACSRRLALFVGAAVLVVG. C26 is lipidated: N-palmitoyl cysteine. The S-diacylglycerol cysteine moiety is linked to residue C26.

The protein belongs to the bacterial solute-binding protein 2 family.

The protein localises to the cell membrane. In terms of biological role, may be involved in the transport of sugars. May have a role in chemotaxis. In Treponema pallidum (strain Nichols), this protein is Glucose/galactose-binding lipoprotein (mglB).